The following is a 291-amino-acid chain: Quinol oxidase subunit 2 (291 aa).

A signal peptide spans 1–28; that stretch reads MQLKKAFWKLASLLPLSLLLFLGGCDKK. 2 helical membrane-spanning segments follow: residues 49–69 and 91–111; these read SFLLMSLIIAIVFILFTVILI and LEIIWTLVPVIIVIALSIPTV.

This sequence belongs to the cytochrome c oxidase subunit 2 family.

The protein resides in the cell membrane. It carries out the reaction 2 a quinol + O2 = 2 a quinone + 2 H2O. In terms of biological role, catalyzes quinol oxidation with the concomitant reduction of oxygen to water. Subunit II transfers the electrons from a quinol to the binuclear center of the catalytic subunit I. The chain is Quinol oxidase subunit 2 from Bacillus cereus (strain ATCC 14579 / DSM 31 / CCUG 7414 / JCM 2152 / NBRC 15305 / NCIMB 9373 / NCTC 2599 / NRRL B-3711).